The primary structure comprises 482 residues: tRNA sulfurtransferase (482 aa).

A THUMP domain is found at 61–165 (LTIRDALTRI…DDRLLLIKGR (105 aa)). ATP contacts are provided by residues 183–184 (LI), lysine 265, glycine 287, and glutamine 296. Cysteine 344 and cysteine 456 are joined by a disulfide. In terms of domain architecture, Rhodanese spans 404-482 (CGPNDVILDI…GFNNVKVYRP (79 aa)). Residue cysteine 456 is the Cysteine persulfide intermediate of the active site.

It belongs to the ThiI family.

Its subcellular location is the cytoplasm. It catalyses the reaction [ThiI sulfur-carrier protein]-S-sulfanyl-L-cysteine + a uridine in tRNA + 2 reduced [2Fe-2S]-[ferredoxin] + ATP + H(+) = [ThiI sulfur-carrier protein]-L-cysteine + a 4-thiouridine in tRNA + 2 oxidized [2Fe-2S]-[ferredoxin] + AMP + diphosphate. The catalysed reaction is [ThiS sulfur-carrier protein]-C-terminal Gly-Gly-AMP + S-sulfanyl-L-cysteinyl-[cysteine desulfurase] + AH2 = [ThiS sulfur-carrier protein]-C-terminal-Gly-aminoethanethioate + L-cysteinyl-[cysteine desulfurase] + A + AMP + 2 H(+). Its pathway is cofactor biosynthesis; thiamine diphosphate biosynthesis. Its function is as follows. Catalyzes the ATP-dependent transfer of a sulfur to tRNA to produce 4-thiouridine in position 8 of tRNAs, which functions as a near-UV photosensor. Also catalyzes the transfer of sulfur to the sulfur carrier protein ThiS, forming ThiS-thiocarboxylate. This is a step in the synthesis of thiazole, in the thiamine biosynthesis pathway. The sulfur is donated as persulfide by IscS. In Shigella dysenteriae serotype 1 (strain Sd197), this protein is tRNA sulfurtransferase.